The primary structure comprises 175 residues: Ribosome maturation factor RimM (175 aa).

A PRC barrel domain is found at 98 to 175; sequence EGEYYWYQLE…EMRVDWDADF (78 aa).

It belongs to the RimM family. Binds ribosomal protein uS19.

The protein resides in the cytoplasm. Functionally, an accessory protein needed during the final step in the assembly of 30S ribosomal subunit, possibly for assembly of the head region. Essential for efficient processing of 16S rRNA. May be needed both before and after RbfA during the maturation of 16S rRNA. It has affinity for free ribosomal 30S subunits but not for 70S ribosomes. In Pseudomonas paraeruginosa (strain DSM 24068 / PA7) (Pseudomonas aeruginosa (strain PA7)), this protein is Ribosome maturation factor RimM.